Here is a 597-residue protein sequence, read N- to C-terminus: Leukocyte immunoglobulin-like receptor subfamily B member 2 (597 aa).

The first 21 residues, 1–21 (MTPIVTVLICLGLSLGPRTRV), serve as a signal peptide directing secretion. Topologically, residues 22–460 (QTGTIPKPTL…QSGLGRHLGV (439 aa)) are extracellular. 4 consecutive Ig-like C2-type domains span residues 27–110 (PKPT…SELS), 111–229 (DPLV…SLSV), 230–318 (QPGP…ILIT), and 330–419 (QPGP…LVVS). 4 disulfides stabilise this stretch: C49-C98, C144-C196, C156-C166, and C245-C296. N280, N301, and N340 each carry an N-linked (GlcNAc...) asparagine glycan. C345 and C396 are oxidised to a cystine. The disordered stretch occupies residues 417-451 (VVSGPSMGSSPPPTGPISTPGPEDQPLTPTGSDPQ). Residues 461–481 (VIGILVAVVLLLLLLLLLFLI) form a helical membrane-spanning segment. At 482-597 (LRHRRQGKHW…PSIYATLAIH (116 aa)) the chain is on the cytoplasmic side. The segment at 491 to 523 (WTSTQRKADFQHPAGAVGPEPTDRGLQWRSSPA) is disordered. Short sequence motifs (ITIM motif) lie at residues 530–535 (NLYAAV), 559–564 (VTYAQL), and 589–594 (SIYATL). Residues 537-597 (DTQPEDGVEM…PSIYATLAIH (61 aa)) form a disordered region.

In terms of assembly, binds PTPN6 when phosphorylated. Binds FCGR1A. Interacts with peptide-bound HLA-G-B2M; this interaction is direct. Interacts with peptide-bound HLA-F-B2M; this interaction is direct. Phosphorylated on tyrosine residues. Dephosphorylated by PTPN6. Expressed in monocytes and at lower levels in myeloid and plasmacytoid dendritic cells. Expressed in tolerogenic IL10-producing dendritic cells. Expressed in myeloid-derived suppressor cells during pregnancy. Detected at low levels in natural killer (NK) cells. Expressed in B cells.

The protein resides in the cell membrane. Receptor for class I MHC antigens. Recognizes a broad spectrum of HLA-A, HLA-B, HLA-C, HLA-G and HLA-F alleles. Involved in the down-regulation of the immune response and the development of tolerance. Recognizes HLA-G in complex with B2M/beta-2 microglobulin and a nonamer self-peptide (peptide-bound HLA-G-B2M) triggering differentiation of type 1 regulatory T cells and myeloid-derived suppressor cells, both of which actively maintain maternal-fetal tolerance. Competes with CD8A for binding to class I MHC antigens. Inhibits FCGR1A-mediated phosphorylation of cellular proteins and mobilization of intracellular calcium ions. The protein is Leukocyte immunoglobulin-like receptor subfamily B member 2 of Homo sapiens (Human).